The sequence spans 201 residues: UPF0301 protein Rleg2_0617 (201 aa).

Belongs to the UPF0301 (AlgH) family.

This Rhizobium leguminosarum bv. trifolii (strain WSM2304) protein is UPF0301 protein Rleg2_0617.